Here is a 319-residue protein sequence, read N- to C-terminus: Homoserine O-acetyltransferase (319 aa).

C142 serves as the catalytic Acyl-thioester intermediate. Substrate-binding residues include K163 and S192. The active-site Proton acceptor is the H235. E237 is an active-site residue. Residue R249 participates in substrate binding.

The protein belongs to the MetA family.

The protein localises to the cytoplasm. The catalysed reaction is L-homoserine + acetyl-CoA = O-acetyl-L-homoserine + CoA. It functions in the pathway amino-acid biosynthesis; L-methionine biosynthesis via de novo pathway; O-acetyl-L-homoserine from L-homoserine: step 1/1. Its function is as follows. Transfers an acetyl group from acetyl-CoA to L-homoserine, forming acetyl-L-homoserine. This Lactococcus lactis subsp. cremoris (strain MG1363) protein is Homoserine O-acetyltransferase.